Consider the following 171-residue polypeptide: Co-chaperone protein HscB (171 aa).

Positions 2–74 constitute a J domain; sequence DYFTLFGLPA…LTRAEYLLSL (73 aa).

The protein belongs to the HscB family. As to quaternary structure, interacts with HscA and stimulates its ATPase activity. Interacts with IscU.

In terms of biological role, co-chaperone involved in the maturation of iron-sulfur cluster-containing proteins. Seems to help targeting proteins to be folded toward HscA. This is Co-chaperone protein HscB from Klebsiella pneumoniae subsp. pneumoniae (strain ATCC 700721 / MGH 78578).